The sequence spans 151 residues: Small ribosomal subunit protein uS15 (151 aa).

Positions 1-20 are disordered; sequence MARLHSGKRGSSGSTRPLRT.

Belongs to the universal ribosomal protein uS15 family. In terms of assembly, part of the 30S ribosomal subunit.

The sequence is that of Small ribosomal subunit protein uS15 from Methanococcus maripaludis (strain C7 / ATCC BAA-1331).